An 89-amino-acid polypeptide reads, in one-letter code: Co-chaperonin GroES (89 aa).

This sequence belongs to the GroES chaperonin family. As to quaternary structure, heptamer of 7 subunits arranged in a ring. Interacts with the chaperonin GroEL.

It is found in the cytoplasm. Functionally, together with the chaperonin GroEL, plays an essential role in assisting protein folding. The GroEL-GroES system forms a nano-cage that allows encapsulation of the non-native substrate proteins and provides a physical environment optimized to promote and accelerate protein folding. GroES binds to the apical surface of the GroEL ring, thereby capping the opening of the GroEL channel. The polypeptide is Co-chaperonin GroES (Wolinella succinogenes (strain ATCC 29543 / DSM 1740 / CCUG 13145 / JCM 31913 / LMG 7466 / NCTC 11488 / FDC 602W) (Vibrio succinogenes)).